The following is a 270-amino-acid chain: 5-deoxy-glucuronate isomerase (270 aa).

It belongs to the isomerase IolB family.

The enzyme catalyses 5-deoxy-D-glucuronate = 5-dehydro-2-deoxy-D-gluconate. It participates in polyol metabolism; myo-inositol degradation into acetyl-CoA; acetyl-CoA from myo-inositol: step 4/7. Functionally, involved in the isomerization of 5-deoxy-glucuronate (5DG) to 5-dehydro-2-deoxy-D-gluconate (DKG or 2-deoxy-5-keto-D-gluconate). The polypeptide is 5-deoxy-glucuronate isomerase (Halalkalibacterium halodurans (strain ATCC BAA-125 / DSM 18197 / FERM 7344 / JCM 9153 / C-125) (Bacillus halodurans)).